The following is a 176-amino-acid chain: Crossover junction endodeoxyribonuclease RuvC (176 aa).

Catalysis depends on residues aspartate 10, glutamate 69, and aspartate 141. Mg(2+) contacts are provided by aspartate 10, glutamate 69, and aspartate 141.

It belongs to the RuvC family. As to quaternary structure, homodimer which binds Holliday junction (HJ) DNA. The HJ becomes 2-fold symmetrical on binding to RuvC with unstacked arms; it has a different conformation from HJ DNA in complex with RuvA. In the full resolvosome a probable DNA-RuvA(4)-RuvB(12)-RuvC(2) complex forms which resolves the HJ. It depends on Mg(2+) as a cofactor.

It is found in the cytoplasm. The enzyme catalyses Endonucleolytic cleavage at a junction such as a reciprocal single-stranded crossover between two homologous DNA duplexes (Holliday junction).. Its function is as follows. The RuvA-RuvB-RuvC complex processes Holliday junction (HJ) DNA during genetic recombination and DNA repair. Endonuclease that resolves HJ intermediates. Cleaves cruciform DNA by making single-stranded nicks across the HJ at symmetrical positions within the homologous arms, yielding a 5'-phosphate and a 3'-hydroxyl group; requires a central core of homology in the junction. The consensus cleavage sequence is 5'-(A/T)TT(C/G)-3'. Cleavage occurs on the 3'-side of the TT dinucleotide at the point of strand exchange. HJ branch migration catalyzed by RuvA-RuvB allows RuvC to scan DNA until it finds its consensus sequence, where it cleaves and resolves the cruciform DNA. The polypeptide is Crossover junction endodeoxyribonuclease RuvC (Dichelobacter nodosus (strain VCS1703A)).